Reading from the N-terminus, the 297-residue chain is 33 kDa chaperonin (297 aa).

Intrachain disulfides connect Cys232–Cys234 and Cys266–Cys269.

Belongs to the HSP33 family. Post-translationally, under oxidizing conditions two disulfide bonds are formed involving the reactive cysteines. Under reducing conditions zinc is bound to the reactive cysteines and the protein is inactive.

It is found in the cytoplasm. Its function is as follows. Redox regulated molecular chaperone. Protects both thermally unfolding and oxidatively damaged proteins from irreversible aggregation. Plays an important role in the bacterial defense system toward oxidative stress. This Azotobacter vinelandii (strain DJ / ATCC BAA-1303) protein is 33 kDa chaperonin.